The chain runs to 477 residues: Mitochondrial adenyl nucleotide antiporter SLC25A24 (477 aa).

A regulatory N-terminal domain region spans residues 1 to 173 (MLRWLRGFVL…RFWKHSTGID (173 aa)). The Mitochondrial intermembrane portion of the chain corresponds to 1 to 197 (MLRWLRGFVL…EKKSGQWWRQ (197 aa)). 4 consecutive EF-hand domains span residues 19 to 54 (EPPTRYETLFQKLDRNGDGVVDISELQEGLKSLGIP), 61 to 85 (EKIFTTGDVNKDGKLDFEEFMKYLK), 86 to 121 (DHEKKMKLAFKSLDKNNDGKIEASEIVQSLQILGLT), and 122 to 157 (ISEQQAELILQSIDADGTMTVDWNEWRDYFLFNPVT). Ca(2+) contacts are provided by aspartate 32, asparagine 34, aspartate 36, valine 38, glutamate 43, aspartate 68, asparagine 70, aspartate 72, lysine 74, glutamate 79, aspartate 99, asparagine 101, aspartate 103, lysine 105, glutamate 110, aspartate 135, aspartate 137, threonine 139, threonine 141, and glutamate 146. Residues 159 to 168 (IEEIIRFWKH) form a linker region region. Positions 174-477 (IGDSLTIPDE…MKQTLGVTQK (304 aa)) are C-terminal transmembrane transporter domain. 3 Solcar repeats span residues 192-278 (GQWW…YKKL), 286-371 (IGTF…LKSH), and 383-471 (PGVM…MKQT). The helical transmembrane segment at 198–215 (LLAGGVAGAVSRTSTAPL) threads the bilayer. The Mitochondrial matrix portion of the chain corresponds to 216 to 252 (DRLKVMMQVHGSKSAKMNIYGGFQQMVKEGGIRSLWR). A helical transmembrane segment spans residues 253–272 (GNGTNVIKIAPETAVKFWAY). Residues 273 to 295 (EQYKKLLTEEGQKIGTFERFVSG) are Mitochondrial intermembrane-facing. A helical transmembrane segment spans residues 296 to 309 (SMAGATAQTFIYPM). The Mitochondrial matrix portion of the chain corresponds to 310–345 (EVLKTRLAVGKTGQYSGMFDCAKKILKYEGMGAFYK). An N6-acetyllysine; alternate modification is found at lysine 320. An N6-succinyllysine; alternate modification is found at lysine 320. Lysine 336 is modified (N6-acetyllysine). A helical transmembrane segment spans residues 346–365 (GYVPNLLGIIPYAGIDLAVY). The Mitochondrial intermembrane portion of the chain corresponds to 366-388 (ELLKSHWLDNFAKDSVNPGVMVL). Residues 389–406 (LGCGALSSTCGQLASYPL) form a helical membrane-spanning segment. Topologically, residues 407 to 445 (ALVRTRMQAQAMIEKSPQLNMVGLFRRILSKEGLPGLYR) are mitochondrial matrix. Lysine 437 is subject to N6-acetyllysine; alternate. Lysine 437 carries the post-translational modification N6-succinyllysine; alternate. The helical transmembrane segment at 446–465 (GITPNFMKVLPAVGISYVVY) threads the bilayer. Over 466 to 477 (ENMKQTLGVTQK) the chain is Mitochondrial intermembrane.

Belongs to the mitochondrial carrier (TC 2.A.29) family. As to quaternary structure, monomer.

It localises to the mitochondrion inner membrane. The enzyme catalyses Mg(2+)(out) + phosphate(in) + ATP(out) = Mg(2+)(in) + phosphate(out) + ATP(in). The catalysed reaction is ADP(out) + phosphate(in) + H(+)(out) = ADP(in) + phosphate(out) + H(+)(in). It catalyses the reaction AMP(out) + phosphate(in) = AMP(in) + phosphate(out). It carries out the reaction phosphate(in) + ATP(out) + 2 H(+)(out) = phosphate(out) + ATP(in) + 2 H(+)(in). The enzyme catalyses dADP(in) + ADP(out) = dADP(out) + ADP(in). The catalysed reaction is Mg(2+)(in) + ADP(out) + ATP(in) + H(+)(out) = Mg(2+)(out) + ADP(in) + ATP(out) + H(+)(in). It catalyses the reaction ADP(out) + diphosphate(in) = ADP(in) + diphosphate(out). It carries out the reaction dAMP(in) + ADP(out) + H(+)(out) = dAMP(out) + ADP(in) + H(+)(in). The enzyme catalyses 3'-AMP(in) + ADP(out) + H(+)(out) = 3'-AMP(out) + ADP(in) + H(+)(in). The catalysed reaction is dAMP(out) + phosphate(in) = dAMP(in) + phosphate(out). It catalyses the reaction 3'-AMP(out) + phosphate(in) = 3'-AMP(in) + phosphate(out). It carries out the reaction dADP(out) + phosphate(in) + H(+)(out) = dADP(in) + phosphate(out) + H(+)(in). Its activity is regulated as follows. Activated by an increase in cytosolic calcium levels that induce a conformational change of the N-terminal regulatory domain, uncapping the channel and allowing transport. Inhibited by bathophenanthroline, mersalyl, p-hydroxymercuribenzoate, bromcresol purple and tannic acid. In terms of biological role, electroneutral antiporter that mediates the transport of adenyl nucleotides through the inner mitochondrial membrane. Originally identified as an ATP-magnesium/inorganic phosphate antiporter, it also acts as a broad specificity adenyl nucleotide antiporter. By regulating the mitochondrial matrix adenyl nucleotide pool could adapt to changing cellular energetic demands and indirectly regulate adenyl nucleotide-dependent metabolic pathways. In vitro, a low activity is also observed with guanyl and pyrimidine nucleotides. May play a role in protecting cells against oxidative stress-induced cell death, by buffering calcium levels in the mitochondrial matrix through the formation of calcium-phosphate precipitates. The chain is Mitochondrial adenyl nucleotide antiporter SLC25A24 (SLC25A24) from Bos taurus (Bovine).